The sequence spans 717 residues: Pre-mRNA-splicing factor ATP-dependent RNA helicase DEAH10 (717 aa).

The segment at 1–29 (MPSMAQGELKSFVQNSRPNPKSPTVSPFS) is disordered. A compositionally biased stretch (polar residues) spans 12–29 (FVQNSRPNPKSPTVSPFS). Residues 51–256 (VEEVQKNDIL…FGGAKAVHVQ (206 aa)) form the Helicase ATP-binding domain. 64–71 (GETGSGKT) contributes to the ATP binding site. Residues 162 to 165 (DEAH) carry the DEAH box motif. Residues 278 to 453 (TLVTIFQIHF…NIILQLKALG (176 aa)) enclose the Helicase C-terminal domain.

Belongs to the DEAD box helicase family. DEAH subfamily. PRP22 sub-subfamily. Widely expressed but spatially and temporally regulated during development.

It is found in the nucleus. It localises to the nucleolus. It catalyses the reaction ATP + H2O = ADP + phosphate + H(+). Involved in pre-mRNA splicing. Plays a role during development in processes such as meristem maintenance, leaf morphogenesis and root morphogenesis. The protein is Pre-mRNA-splicing factor ATP-dependent RNA helicase DEAH10 of Arabidopsis thaliana (Mouse-ear cress).